The sequence spans 811 residues: Probable inorganic carbon transporter subunit DabA (811 aa).

Zn(2+) is bound by residues Cys-336, Asp-338, His-498, and Cys-513.

This sequence belongs to the inorganic carbon transporter (TC 9.A.2) DabA family. As to quaternary structure, forms a complex with DabB. Zn(2+) serves as cofactor.

It is found in the cell inner membrane. Its function is as follows. Part of an energy-coupled inorganic carbon pump. This is Probable inorganic carbon transporter subunit DabA from Rhodospirillum centenum (strain ATCC 51521 / SW).